We begin with the raw amino-acid sequence, 360 residues long: Phospho-N-acetylmuramoyl-pentapeptide-transferase (360 aa).

The next 10 helical transmembrane spans lie at 26-46 (SIMA…KVIN), 73-93 (TMGG…WADL), 98-118 (VWFT…DDYW), 132-152 (WKYF…YAMG), 168-188 (VMPQ…VGTS), 199-219 (GLAI…AWAT), 236-256 (SGEL…FLWY), 263-283 (VFMG…IAVL), 288-308 (LLLL…ILQV), and 338-358 (VIVR…VTLK).

The protein belongs to the glycosyltransferase 4 family. MraY subfamily. Mg(2+) serves as cofactor.

Its subcellular location is the cell inner membrane. It carries out the reaction UDP-N-acetyl-alpha-D-muramoyl-L-alanyl-gamma-D-glutamyl-meso-2,6-diaminopimeloyl-D-alanyl-D-alanine + di-trans,octa-cis-undecaprenyl phosphate = di-trans,octa-cis-undecaprenyl diphospho-N-acetyl-alpha-D-muramoyl-L-alanyl-D-glutamyl-meso-2,6-diaminopimeloyl-D-alanyl-D-alanine + UMP. It functions in the pathway cell wall biogenesis; peptidoglycan biosynthesis. Its function is as follows. Catalyzes the initial step of the lipid cycle reactions in the biosynthesis of the cell wall peptidoglycan: transfers peptidoglycan precursor phospho-MurNAc-pentapeptide from UDP-MurNAc-pentapeptide onto the lipid carrier undecaprenyl phosphate, yielding undecaprenyl-pyrophosphoryl-MurNAc-pentapeptide, known as lipid I. The protein is Phospho-N-acetylmuramoyl-pentapeptide-transferase of Haemophilus ducreyi (strain 35000HP / ATCC 700724).